A 93-amino-acid polypeptide reads, in one-letter code: C-C motif chemokine 17 (93 aa).

Positions 1–23 (MMSLQMLLLAALLLGTSLQHASA) are cleaved as a signal peptide. 2 disulfide bridges follow: Cys33–Cys57 and Cys34–Cys73.

This sequence belongs to the intercrine beta (chemokine CC) family.

The protein resides in the secreted. Its function is as follows. Chemokine, which displays chemotactic activity for T lymphocytes, preferentially Th2 cells, but not monocytes or granulocytes. Therefore plays an important role in a wide range of inflammatory and immunological processes. Acts by binding to CCR4 at T-cell surface. Mediates GM-CSF/CSF2-driven pain and inflammation. In the brain, required to maintain the typical, highly branched morphology of hippocampal microglia under homeostatic conditions. May be important for the appropriate adaptation of microglial morphology and synaptic plasticity to acute lipopolysaccharide (LPS)-induced neuroinflammation. Plays a role in wound healing, mainly by inducing fibroblast migration into the wound. This is C-C motif chemokine 17 (Ccl17) from Rattus norvegicus (Rat).